Here is a 362-residue protein sequence, read N- to C-terminus: Putative lipoprotein YdaJ (362 aa).

Positions 1 to 20 are cleaved as a signal peptide; sequence MRHVLIAVILFFLSIGLSAG. C21 is lipidated: N-palmitoyl cysteine. Residue C21 is the site of S-diacylglycerol cysteine attachment.

It localises to the cell membrane. This chain is Putative lipoprotein YdaJ (ydaJ), found in Bacillus subtilis (strain 168).